The chain runs to 411 residues: 2,3-bisphosphoglycerate-independent phosphoglycerate mutase 1 (411 aa).

Belongs to the BPG-independent phosphoglycerate mutase family. A-PGAM subfamily. As to quaternary structure, homotetramer. The cofactor is Mg(2+).

It catalyses the reaction (2R)-2-phosphoglycerate = (2R)-3-phosphoglycerate. The protein operates within carbohydrate degradation; glycolysis; pyruvate from D-glyceraldehyde 3-phosphate: step 3/5. With respect to regulation, inhibited to approximately 20% by EDTA. Functionally, catalyzes the interconversion of 2-phosphoglycerate and 3-phosphoglycerate. This Methanocaldococcus jannaschii (strain ATCC 43067 / DSM 2661 / JAL-1 / JCM 10045 / NBRC 100440) (Methanococcus jannaschii) protein is 2,3-bisphosphoglycerate-independent phosphoglycerate mutase 1 (apgM1).